Consider the following 319-residue polypeptide: NADH-quinone oxidoreductase subunit H 1 (319 aa).

Transmembrane regions (helical) follow at residues 1-21 (MIGL…LLVV), 77-97 (ILAP…VAFG), 107-127 (VGVL…MLGA), 147-167 (LAYE…AGSL), 179-199 (VWFV…GVAA), 214-234 (LVAG…FLGE), 238-258 (VLLV…GPWL), 262-282 (IWFG…RATL), and 293-313 (FAWK…GIVV).

It belongs to the complex I subunit 1 family. In terms of assembly, NDH-1 is composed of 14 different subunits. Subunits NuoA, H, J, K, L, M, N constitute the membrane sector of the complex.

It is found in the cell inner membrane. The enzyme catalyses a quinone + NADH + 5 H(+)(in) = a quinol + NAD(+) + 4 H(+)(out). NDH-1 shuttles electrons from NADH, via FMN and iron-sulfur (Fe-S) centers, to quinones in the respiratory chain. The immediate electron acceptor for the enzyme in this species is believed to be ubiquinone. Couples the redox reaction to proton translocation (for every two electrons transferred, four hydrogen ions are translocated across the cytoplasmic membrane), and thus conserves the redox energy in a proton gradient. This subunit may bind ubiquinone. The chain is NADH-quinone oxidoreductase subunit H 1 from Rhodopseudomonas palustris (strain HaA2).